We begin with the raw amino-acid sequence, 417 residues long: UDP-N-acetylglucosamine 1-carboxyvinyltransferase (417 aa).

22–23 contributes to the phosphoenolpyruvate binding site; it reads KN. R93 lines the UDP-N-acetyl-alpha-D-glucosamine pocket. The Proton donor role is filled by C117. Residue C117 is modified to 2-(S-cysteinyl)pyruvic acid O-phosphothioketal. UDP-N-acetyl-alpha-D-glucosamine is bound by residues 122–126, D305, and I327; that span reads RPVDL.

The protein belongs to the EPSP synthase family. MurA subfamily.

It is found in the cytoplasm. The enzyme catalyses phosphoenolpyruvate + UDP-N-acetyl-alpha-D-glucosamine = UDP-N-acetyl-3-O-(1-carboxyvinyl)-alpha-D-glucosamine + phosphate. Its pathway is cell wall biogenesis; peptidoglycan biosynthesis. Cell wall formation. Adds enolpyruvyl to UDP-N-acetylglucosamine. This is UDP-N-acetylglucosamine 1-carboxyvinyltransferase from Thiobacillus denitrificans (strain ATCC 25259 / T1).